A 292-amino-acid polypeptide reads, in one-letter code: MSNHDQLHRYLFENYAVRGELVTVSETYQQVLNNHDYPAPVKKLLGELLVATSLLTATLKFDGDITVQLQGDGPLKLAVINGNNRQEMRGVARVQSEIADDSTLHQMIGNGVMVITIAPTEGERYQGVVALEGETLAECLEAYFRQSEQLPTRLFIRTGESEGQPAAGGMLLQVLPAQDGNADDFDHLVQLTNTVKSEELFGLPANEVLYRLYHQEEVTLYEPQDVVFRCTCSRQRCADALITLPAEEVAQMLEQDGNIDMHCDYCGNHYVFDAMDVAALYTGNTGESEQLH.

Disulfide bonds link cysteine 230/cysteine 232 and cysteine 263/cysteine 266.

The protein belongs to the HSP33 family. Under oxidizing conditions two disulfide bonds are formed involving the reactive cysteines. Under reducing conditions zinc is bound to the reactive cysteines and the protein is inactive.

The protein resides in the cytoplasm. In terms of biological role, redox regulated molecular chaperone. Protects both thermally unfolding and oxidatively damaged proteins from irreversible aggregation. Plays an important role in the bacterial defense system toward oxidative stress. In Serratia proteamaculans (strain 568), this protein is 33 kDa chaperonin.